Reading from the N-terminus, the 459-residue chain is FBD-associated F-box protein At5g27750 (459 aa).

An F-box domain is found at 4-50 (FDRISELPESLITQILLCLPTKDSVKTSVLSTRWKNLWLNVPGLDLT). Residues 374 to 426 (TEELNLINVPRCIVSTLECVEIKGLFEWEEEEMKIARYFLENAAVLKKLTMSF) enclose the FBD domain.

The polypeptide is FBD-associated F-box protein At5g27750 (Arabidopsis thaliana (Mouse-ear cress)).